A 479-amino-acid chain; its full sequence is Aspartyl/glutamyl-tRNA(Asn/Gln) amidotransferase subunit B (479 aa).

The protein belongs to the GatB/GatE family. GatB subfamily. Heterotrimer of A, B and C subunits.

The catalysed reaction is L-glutamyl-tRNA(Gln) + L-glutamine + ATP + H2O = L-glutaminyl-tRNA(Gln) + L-glutamate + ADP + phosphate + H(+). The enzyme catalyses L-aspartyl-tRNA(Asn) + L-glutamine + ATP + H2O = L-asparaginyl-tRNA(Asn) + L-glutamate + ADP + phosphate + 2 H(+). Allows the formation of correctly charged Asn-tRNA(Asn) or Gln-tRNA(Gln) through the transamidation of misacylated Asp-tRNA(Asn) or Glu-tRNA(Gln) in organisms which lack either or both of asparaginyl-tRNA or glutaminyl-tRNA synthetases. The reaction takes place in the presence of glutamine and ATP through an activated phospho-Asp-tRNA(Asn) or phospho-Glu-tRNA(Gln). The protein is Aspartyl/glutamyl-tRNA(Asn/Gln) amidotransferase subunit B of Streptococcus pyogenes serotype M5 (strain Manfredo).